Here is a 79-residue protein sequence, read N- to C-terminus: Small ribosomal subunit protein bS18 (79 aa).

It belongs to the bacterial ribosomal protein bS18 family. Part of the 30S ribosomal subunit. Forms a tight heterodimer with protein bS6.

Its function is as follows. Binds as a heterodimer with protein bS6 to the central domain of the 16S rRNA, where it helps stabilize the platform of the 30S subunit. The protein is Small ribosomal subunit protein bS18 of Streptococcus thermophilus (strain CNRZ 1066).